Consider the following 28-residue polypeptide: Ranatuerin-2B (28 aa).

A disulfide bond links Cys-23 and Cys-28.

In terms of tissue distribution, expressed by the skin glands.

It is found in the secreted. In terms of biological role, antibacterial activity against Gram-positive bacterium S.aureus and Gram-negative bacterium E.coli. Has activity against C.albicans. The polypeptide is Ranatuerin-2B (Lithobates berlandieri (Rio Grande leopard frog)).